Reading from the N-terminus, the 282-residue chain is Centromere protein P (282 aa).

Residues 1 to 80 (MEQKYEEDIQ…KDLRRQTEIN (80 aa)) are a coiled coil.

The protein belongs to the CENP-P/CTF19 family.

The protein localises to the nucleus. Its subcellular location is the chromosome. The protein resides in the centromere. Probable component of a centromeric complex involved in assembly of kinetochore proteins, mitotic progression and chromosome segregation. This is Centromere protein P (cenpp) from Danio rerio (Zebrafish).